The primary structure comprises 417 residues: Glutamyl-tRNA reductase (417 aa).

Substrate contacts are provided by residues 49-52, Ser109, 114-116, and Gln120; these read TCNR and ESQ. The active-site Nucleophile is Cys50. Residue 189–194 coordinates NADP(+); that stretch reads GLGEIG.

This sequence belongs to the glutamyl-tRNA reductase family. In terms of assembly, homodimer.

It carries out the reaction (S)-4-amino-5-oxopentanoate + tRNA(Glu) + NADP(+) = L-glutamyl-tRNA(Glu) + NADPH + H(+). Its pathway is porphyrin-containing compound metabolism; protoporphyrin-IX biosynthesis; 5-aminolevulinate from L-glutamyl-tRNA(Glu): step 1/2. Catalyzes the NADPH-dependent reduction of glutamyl-tRNA(Glu) to glutamate 1-semialdehyde (GSA). In Streptococcus sanguinis (strain SK36), this protein is Glutamyl-tRNA reductase.